The sequence spans 224 residues: Thymidylate kinase (224 aa).

7–14 (GIEGSGKS) contacts ATP.

The protein belongs to the thymidylate kinase family.

It carries out the reaction dTMP + ATP = dTDP + ADP. Its function is as follows. Phosphorylation of dTMP to form dTDP in both de novo and salvage pathways of dTTP synthesis. The sequence is that of Thymidylate kinase from Nitratidesulfovibrio vulgaris (strain DP4) (Desulfovibrio vulgaris).